The sequence spans 515 residues: Probable cytosol aminopeptidase (515 aa).

The Mn(2+) site is built by Lys274 and Asp279. Lys286 is a catalytic residue. Positions 297, 356, and 358 each coordinate Mn(2+). Residue Arg360 is part of the active site.

This sequence belongs to the peptidase M17 family. Mn(2+) is required as a cofactor.

The protein localises to the cytoplasm. It carries out the reaction Release of an N-terminal amino acid, Xaa-|-Yaa-, in which Xaa is preferably Leu, but may be other amino acids including Pro although not Arg or Lys, and Yaa may be Pro. Amino acid amides and methyl esters are also readily hydrolyzed, but rates on arylamides are exceedingly low.. It catalyses the reaction Release of an N-terminal amino acid, preferentially leucine, but not glutamic or aspartic acids.. Presumably involved in the processing and regular turnover of intracellular proteins. Catalyzes the removal of unsubstituted N-terminal amino acids from various peptides. This Desulforapulum autotrophicum (strain ATCC 43914 / DSM 3382 / VKM B-1955 / HRM2) (Desulfobacterium autotrophicum) protein is Probable cytosol aminopeptidase.